Here is a 283-residue protein sequence, read N- to C-terminus: Acetylglutamate kinase (283 aa).

Substrate contacts are provided by residues 64-65 (GG), arginine 86, and asparagine 181.

This sequence belongs to the acetylglutamate kinase family. ArgB subfamily.

It is found in the cytoplasm. The enzyme catalyses N-acetyl-L-glutamate + ATP = N-acetyl-L-glutamyl 5-phosphate + ADP. The protein operates within amino-acid biosynthesis; L-arginine biosynthesis; N(2)-acetyl-L-ornithine from L-glutamate: step 2/4. Catalyzes the ATP-dependent phosphorylation of N-acetyl-L-glutamate. The sequence is that of Acetylglutamate kinase from Sulfurimonas denitrificans (strain ATCC 33889 / DSM 1251) (Thiomicrospira denitrificans (strain ATCC 33889 / DSM 1251)).